The following is a 96-amino-acid chain: Large ribosomal subunit protein bL28 (96 aa).

This sequence belongs to the bacterial ribosomal protein bL28 family.

In Methylocella silvestris (strain DSM 15510 / CIP 108128 / LMG 27833 / NCIMB 13906 / BL2), this protein is Large ribosomal subunit protein bL28.